A 191-amino-acid chain; its full sequence is Putative glutathione-dependent formaldehyde-activating enzyme (191 aa).

A CENP-V/GFA domain is found at 20–166 (FAGGNLYCKC…FKAVGLETYD (147 aa)). Residues Cys-27, Cys-29, Cys-48, Cys-50, Cys-53, Cys-95, and Cys-98 each contribute to the Zn(2+) site.

It belongs to the Gfa family. The cofactor is Zn(2+).

It catalyses the reaction S-(hydroxymethyl)glutathione = glutathione + formaldehyde. It participates in one-carbon metabolism; formaldehyde degradation; formate from formaldehyde (glutathione route): step 1/3. Functionally, catalyzes the condensation of formaldehyde and glutathione to S-hydroxymethylglutathione. The chain is Putative glutathione-dependent formaldehyde-activating enzyme from Aspergillus terreus (strain NIH 2624 / FGSC A1156).